We begin with the raw amino-acid sequence, 773 residues long: Probable C-mannosyltransferase DPY19L2 (773 aa).

The disordered stretch occupies residues 1 to 45; sequence MVGPTRSKLREGSSDRPQSSCTGQARRRWSAATMEPQQERSAPQE. At 1 to 122 the chain is on the nuclear side; that stretch reads MVGPTRSKLR…ALQMHRFSHR (122 aa). Residues 123-143 traverse the membrane as a helical segment; it reads TLFGLAIFVGILHWLHLITLF. Residues 144–209 are Perinuclear space-facing; sequence ENDHHFSHLS…INTVKRFHLY (66 aa). A helical transmembrane segment spans residues 210-230; the sequence is PEVVIAYWYRTIIGIMNLFGI. Over 231 to 256 the chain is Nuclear; the sequence is ETKTCWNVTRMEPLNEVQSCEGLGDP. Residues 257-277 form a helical membrane-spanning segment; that stretch reads ACFYIGVIFILNGLMMGLFFI. The Perinuclear space portion of the chain corresponds to 278-311; it reads YSTYLSGSQLGGLITVACYFFNHGEATRVMWTPP. The chain crosses the membrane as a helical span at residues 312 to 332; sequence LRESFSYPFLVLQMYILTIIL. Residues 333–358 are Nuclear-facing; that stretch reads RTSTVHKKHYMALCFSNVAFMLPWQF. The helical transmembrane segment at 359-379 threads the bilayer; the sequence is AQFILFTQIASLFPMYVVGYI. Topologically, residues 380–386 are perinuclear space; sequence EPSKFQK. The helical transmembrane segment at 387–407 threads the bilayer; it reads IIYVNMSSVALCFILMFGNSM. At 408–437 the chain is on the nuclear side; sequence YLSSYYSSCLLVTWAIMQKKSKIQKLGGTE. A helical transmembrane segment spans residues 438 to 458; sequence LQFWLIQGCFWWCGTIILKFL. Over 459–507 the chain is Perinuclear space; it reads TSKICGVSDHIRLSDLIAARILRYTDFDTLIYTCAPEFDFMEQATPLRY. A helical membrane pass occupies residues 508–528; the sequence is IKTLLLPLILVITYLIFKKIV. At 529 to 548 the chain is on the nuclear side; sequence RDIMCVLYTNTYVRKQLLDN. A helical transmembrane segment spans residues 549-569; the sequence is AELIFHTLQLLAFTGLAILIM. Residues 570–590 are Perinuclear space-facing; the sequence is RLKLFLTPHMCIMASLICSQR. The helical transmembrane segment at 591 to 611 threads the bilayer; the sequence is LFGWLFCRIHFENVVFGILTM. The Nuclear portion of the chain corresponds to 612–773; sequence MSIQGCANLH…NSMYRVLKIN (162 aa).

Belongs to the dpy-19 family. In terms of assembly, interacts with FAM209. Predominantly expressed in testis. Present in testis but absent from epididymal sperm (at protein level).

Its subcellular location is the nucleus inner membrane. Its function is as follows. Probable C-mannosyltransferase that mediates C-mannosylation of tryptophan residues on target proteins. Required during spermatogenesis for sperm head elongation and acrosome formation. Also plays a role in acrosome attachment to the nuclear envelope. The sequence is that of Probable C-mannosyltransferase DPY19L2 (Dpy19l2) from Mus musculus (Mouse).